The chain runs to 282 residues: NH(3)-dependent NAD(+) synthetase (282 aa).

51 to 58 (GISGGVDS) is an ATP binding site. A Mg(2+)-binding site is contributed by Asp-57. Deamido-NAD(+) is bound at residue Arg-148. Thr-168 contacts ATP. Glu-173 contacts Mg(2+). Lys-181 and Asp-188 together coordinate deamido-NAD(+). ATP-binding residues include Lys-197 and Thr-219. 268–269 (HK) provides a ligand contact to deamido-NAD(+).

The protein belongs to the NAD synthetase family. Homodimer.

It catalyses the reaction deamido-NAD(+) + NH4(+) + ATP = AMP + diphosphate + NAD(+) + H(+). The protein operates within cofactor biosynthesis; NAD(+) biosynthesis; NAD(+) from deamido-NAD(+) (ammonia route): step 1/1. Its function is as follows. Catalyzes the ATP-dependent amidation of deamido-NAD to form NAD. Uses ammonia as a nitrogen source. This is NH(3)-dependent NAD(+) synthetase from Burkholderia ambifaria (strain MC40-6).